We begin with the raw amino-acid sequence, 216 residues long: Uracil phosphoribosyltransferase (216 aa).

5-phospho-alpha-D-ribose 1-diphosphate is bound by residues Arg84, Arg109, and 137–145 (DPMLATGGS). Uracil is bound by residues Ile202 and 207–209 (GDA). 5-phospho-alpha-D-ribose 1-diphosphate is bound at residue Asp208.

It belongs to the UPRTase family. The cofactor is Mg(2+).

It catalyses the reaction UMP + diphosphate = 5-phospho-alpha-D-ribose 1-diphosphate + uracil. The protein operates within pyrimidine metabolism; UMP biosynthesis via salvage pathway; UMP from uracil: step 1/1. Its activity is regulated as follows. Allosterically activated by GTP. Functionally, catalyzes the conversion of uracil and 5-phospho-alpha-D-ribose 1-diphosphate (PRPP) to UMP and diphosphate. The sequence is that of Uracil phosphoribosyltransferase from Nostoc sp. (strain PCC 7120 / SAG 25.82 / UTEX 2576).